Reading from the N-terminus, the 772-residue chain is Uracil catabolism protein 2 (772 aa).

Positions 1-70 (MDINSNASVS…KKPRKKRKTF (70 aa)) are disordered. Residues 39–51 (HPEDSARAKERSE) are compositionally biased toward basic and acidic residues. Basic residues predominate over residues 59–69 (GNKKPRKKRKT). The zn(2)-C6 fungal-type DNA-binding region spans 72-101 (CDTCRRVKTRCDFEPFIGKCYRCNVLQLDC).

The protein belongs to the URC2 family.

The protein resides in the cytoplasm. The protein localises to the nucleus. In terms of biological role, probable transcriptional activator involved in uracil catabolism. The polypeptide is Uracil catabolism protein 2 (URC2) (Saccharomyces cerevisiae (strain ATCC 204508 / S288c) (Baker's yeast)).